The primary structure comprises 207 residues: Ribonuclease HII (207 aa).

Residues 12–201 (DLVAGVDEVG…VRAAWEAREG (190 aa)) enclose the RNase H type-2 domain. 3 residues coordinate a divalent metal cation: Asp18, Glu19, and Asp110.

Belongs to the RNase HII family. The cofactor is Mn(2+). Mg(2+) is required as a cofactor.

The protein localises to the cytoplasm. The enzyme catalyses Endonucleolytic cleavage to 5'-phosphomonoester.. Its function is as follows. Endonuclease that specifically degrades the RNA of RNA-DNA hybrids. This chain is Ribonuclease HII, found in Pseudomonas putida (strain ATCC 47054 / DSM 6125 / CFBP 8728 / NCIMB 11950 / KT2440).